The following is a 317-amino-acid chain: Small ribosomal subunit protein RACK1 (317 aa).

7 WD repeats span residues 13-44 (GHSG…IMWK), 61-91 (GHSH…RLWD), 103-133 (GHTK…KLWN), 146-178 (SHTE…KVWN), 190-220 (GHTG…MLWD), 231-260 (DGGD…KIWD), and 281-311 (AEPP…RVWQ).

It belongs to the WD repeat G protein beta family. Ribosomal protein RACK1 subfamily.

The protein resides in the cytoplasm. Functionally, involved in the recruitment, assembly and/or regulation of a variety of signaling molecules. Interacts with a wide variety of proteins and plays a role in many cellular processes. Required for VANGL2 membrane localization, inhibits Wnt signaling and regulates cellular polarization and oriented cell division during gastrulation. The polypeptide is Small ribosomal subunit protein RACK1 (gnb2l1) (Danio rerio (Zebrafish)).